The sequence spans 311 residues: Pyrimidine-specific ribonucleoside hydrolase RihA (311 aa).

Residue histidine 240 is part of the active site.

This sequence belongs to the IUNH family. RihA subfamily.

In terms of biological role, hydrolyzes with equal efficiency cytidine or uridine to ribose and cytosine or uracil, respectively. The chain is Pyrimidine-specific ribonucleoside hydrolase RihA from Escherichia coli O127:H6 (strain E2348/69 / EPEC).